The chain runs to 178 residues: ATP-dependent protease subunit HslV (178 aa).

Thr7 is a catalytic residue. Na(+) is bound by residues Gly162, Cys165, and Thr168.

This sequence belongs to the peptidase T1B family. HslV subfamily. As to quaternary structure, a double ring-shaped homohexamer of HslV is capped on each side by a ring-shaped HslU homohexamer. The assembly of the HslU/HslV complex is dependent on binding of ATP.

The protein localises to the cytoplasm. It catalyses the reaction ATP-dependent cleavage of peptide bonds with broad specificity.. Allosterically activated by HslU binding. Its function is as follows. Protease subunit of a proteasome-like degradation complex believed to be a general protein degrading machinery. This is ATP-dependent protease subunit HslV from Janthinobacterium sp. (strain Marseille) (Minibacterium massiliensis).